A 273-amino-acid chain; its full sequence is 2,3,4,5-tetrahydropyridine-2,6-dicarboxylate N-succinyltransferase (273 aa).

Substrate-binding residues include Arg104 and Asp141.

The protein belongs to the transferase hexapeptide repeat family. In terms of assembly, homotrimer.

The protein resides in the cytoplasm. The enzyme catalyses (S)-2,3,4,5-tetrahydrodipicolinate + succinyl-CoA + H2O = (S)-2-succinylamino-6-oxoheptanedioate + CoA. Its pathway is amino-acid biosynthesis; L-lysine biosynthesis via DAP pathway; LL-2,6-diaminopimelate from (S)-tetrahydrodipicolinate (succinylase route): step 1/3. The chain is 2,3,4,5-tetrahydropyridine-2,6-dicarboxylate N-succinyltransferase from Aromatoleum aromaticum (strain DSM 19018 / LMG 30748 / EbN1) (Azoarcus sp. (strain EbN1)).